The primary structure comprises 278 residues: Neuronal membrane glycoprotein M6-a (278 aa).

N-acetylmethionine is present on Met-1. Topologically, residues 1-22 (MEENMEEGQTQKGCFECCIKCL) are cytoplasmic. Residues 23 to 43 (GGIPYASLIATILLYAGVALF) traverse the membrane as a helical segment. The Extracellular segment spans residues 44–84 (CGCGHEALSGTVNILQTYFEMARTAGDTLDVFTMIDIFKYV). The chain crosses the membrane as a helical span at residues 85 to 105 (IYGIAAAFFVYGILLMVEGFF). Residues 106–127 (TTGAIKDLYGDFKITTCGRCVS) lie on the Cytoplasmic side of the membrane. The chain crosses the membrane as a helical span at residues 128 to 148 (AWFIMLTYLFMLAWLGVTAFT). Residues 149–213 (SLPVYMYFNV…STELNMTFHL (65 aa)) lie on the Extracellular side of the membrane. The N-linked (GlcNAc...) asparagine glycan is linked to Asn-164. A disulfide bridge connects residues Cys-174 and Cys-192. A glycan (N-linked (GlcNAc...) asparagine) is linked at Asn-208. Residues 214–234 (FIVALAGAGAAVIAMVHYLMV) form a helical membrane-spanning segment. Over 235–278 (LSANWAYVKDACRMQKYEDIKSKEEQELHDIHSTRSKERLNAYT) the chain is Cytoplasmic. Residue Ser-256 is modified to Phosphoserine. The residue at position 278 (Thr-278) is a Phosphothreonine.

This sequence belongs to the myelin proteolipid protein family. In terms of assembly, interacts with OPRM1. Interacts with palmitoyltransferase ZDHHC17/HIP14; the interaction leads to palmitoylation of GPM6A. In terms of processing, N-glycosylated. Palmitoylated by ZDHHC17/HIP14. Expressed in hippocampus (at protein level). Isoform 1 is the predominant isoform expressed in brain, specifically in hippocampus. Isoform 2 is expressed at low levels in brain and kidney.

Its subcellular location is the cell membrane. The protein resides in the cell projection. The protein localises to the axon. It localises to the growth cone. It is found in the dendritic spine. Its subcellular location is the filopodium. The protein resides in the neuron projection. Its function is as follows. Involved in neuronal differentiation, including differentiation and migration of neuronal stem cells. Plays a role in neuronal plasticity and is involved in neurite and filopodia outgrowth, filopodia motility and probably synapse formation. Gpm6a-induced filopodia formation involves mitogen-activated protein kinase (MAPK) and Src signaling pathways. May be involved in neuronal NGF-dependent Ca(2+) influx. May be involved in regulation of endocytosis and intracellular trafficking of G-protein-coupled receptors (GPCRs); enhances internalization and recycling of mu-type opioid receptor. The chain is Neuronal membrane glycoprotein M6-a (Gpm6a) from Rattus norvegicus (Rat).